The following is a 210-amino-acid chain: Meiotic coiled-coil protein 7 (210 aa).

Residues 77–148 are a coiled coil; it reads KRSRESVLGS…LKTQLSNLNH (72 aa).

The protein belongs to the MND1 family. As to quaternary structure, interacts with meu13.

It localises to the cytoplasm. It is found in the nucleus. Required for meiotic recombination. This chain is Meiotic coiled-coil protein 7 (mcp7), found in Schizosaccharomyces pombe (strain 972 / ATCC 24843) (Fission yeast).